Here is a 384-residue protein sequence, read N- to C-terminus: Adaptive-response sensory kinase SasA (384 aa).

The Histidine kinase domain maps to 162–384 (MLAHDLRSPL…SFHFTLPVYR (223 aa)). A Phosphohistidine; by autocatalysis modification is found at His165.

In terms of assembly, homooligomerizes. Interacts with KaiC. Participates in the KaiABC clock complex, whose core is composed of a KaiC homohexamer, 6 KaiB and up to 6 KaiA dimers. SasA and KaiB(fs) compete to bind to KaiC.

The catalysed reaction is ATP + protein L-histidine = ADP + protein N-phospho-L-histidine.. Member of the two-component regulatory system SasA/RpaA involved in genome-wide circadian gene expression. One of several clock output pathways. Participates in the Kai clock protein complex, the main circadian regulator in cyanobacteria, via its interaction with KaiC. KaiC enhances the autophosphorylation activity of SasA, which then transfers its phosphate group to RpaA to activate it. In addition to its output function, recruits fold-shifted KaiB (KaiB(fs)) to KaiC to cooperatively form the KaiB(6):KaiC(6) complex (independent of SasA kinase activity). Required for robustness of the circadian rhythm of gene expression and is involved in clock output, also required for adaptation to light/dark cycles. This is Adaptive-response sensory kinase SasA from Microcystis aeruginosa (strain NIES-843 / IAM M-2473).